Reading from the N-terminus, the 142-residue chain is Large ribosomal subunit protein bL17 (142 aa).

Belongs to the bacterial ribosomal protein bL17 family. Part of the 50S ribosomal subunit. Contacts protein L32.

This chain is Large ribosomal subunit protein bL17, found in Chlamydia caviae (strain ATCC VR-813 / DSM 19441 / 03DC25 / GPIC) (Chlamydophila caviae).